The primary structure comprises 312 residues: Methionyl-tRNA formyltransferase (312 aa).

117 to 120 (SLLP) is a (6S)-5,6,7,8-tetrahydrofolate binding site.

Belongs to the Fmt family.

The catalysed reaction is L-methionyl-tRNA(fMet) + (6R)-10-formyltetrahydrofolate = N-formyl-L-methionyl-tRNA(fMet) + (6S)-5,6,7,8-tetrahydrofolate + H(+). Its function is as follows. Attaches a formyl group to the free amino group of methionyl-tRNA(fMet). The formyl group appears to play a dual role in the initiator identity of N-formylmethionyl-tRNA by promoting its recognition by IF2 and preventing the misappropriation of this tRNA by the elongation apparatus. The protein is Methionyl-tRNA formyltransferase of Bordetella pertussis (strain Tohama I / ATCC BAA-589 / NCTC 13251).